The sequence spans 461 residues: ATP-dependent protease ATPase subunit HslU (461 aa).

Residues I18 and 60–65 (GVGKTE) each bind ATP. A disordered region spans residues 157-178 (EGSSVKPEPTAQQKESRQKMRK). Positions 273, 339, and 411 each coordinate ATP.

Belongs to the ClpX chaperone family. HslU subfamily. In terms of assembly, a double ring-shaped homohexamer of HslV is capped on each side by a ring-shaped HslU homohexamer. The assembly of the HslU/HslV complex is dependent on binding of ATP.

The protein localises to the cytoplasm. ATPase subunit of a proteasome-like degradation complex; this subunit has chaperone activity. The binding of ATP and its subsequent hydrolysis by HslU are essential for unfolding of protein substrates subsequently hydrolyzed by HslV. HslU recognizes the N-terminal part of its protein substrates and unfolds these before they are guided to HslV for hydrolysis. This chain is ATP-dependent protease ATPase subunit HslU, found in Magnetococcus marinus (strain ATCC BAA-1437 / JCM 17883 / MC-1).